An 872-amino-acid chain; its full sequence is Alanine--tRNA ligase (872 aa).

Positions 567, 571, 669, and 673 each coordinate Zn(2+).

It belongs to the class-II aminoacyl-tRNA synthetase family. Zn(2+) serves as cofactor.

It localises to the cytoplasm. It carries out the reaction tRNA(Ala) + L-alanine + ATP = L-alanyl-tRNA(Ala) + AMP + diphosphate. Its function is as follows. Catalyzes the attachment of alanine to tRNA(Ala) in a two-step reaction: alanine is first activated by ATP to form Ala-AMP and then transferred to the acceptor end of tRNA(Ala). Also edits incorrectly charged Ser-tRNA(Ala) and Gly-tRNA(Ala) via its editing domain. This is Alanine--tRNA ligase from Streptococcus pyogenes serotype M2 (strain MGAS10270).